A 359-amino-acid polypeptide reads, in one-letter code: Guanine nucleotide-binding protein subunit alpha-11 (359 aa).

Residues Cys9 and Cys10 are each lipidated (S-palmitoyl cysteine). Residues 38 to 359 (RELKLLLLGT…QLNLKEYNLV (322 aa)) enclose the G-alpha domain. Positions 41-54 (KLLLLGTGESGKST) are G1 motif. GTP contacts are provided by residues 46–53 (GTGESGKS) and 180–183 (LRVR). Residue Ser53 coordinates Mg(2+). The interval 178–186 (DVLRVRVPT) is G2 motif. Residue Thr186 participates in Mg(2+) binding. The G3 motif stretch occupies residues 201–210 (FRMVDVGGQR). The segment at 270–277 (ILFLNKKD) is G4 motif. GTP is bound by residues 274–277 (NKKD) and Ala331. The segment at 329 to 334 (TCATDT) is G5 motif.

It belongs to the G-alpha family. G(q) subfamily. In terms of assembly, g proteins are composed of 3 units; alpha, beta and gamma. The alpha chain contains the guanine nucleotide binding site. Interacts with RGS22. Interacts with NTSR1.

Its subcellular location is the cell membrane. The protein resides in the cytoplasm. It catalyses the reaction GTP + H2O = GDP + phosphate + H(+). Functionally, guanine nucleotide-binding proteins (G proteins) function as transducers downstream of G protein-coupled receptors (GPCRs) in numerous signaling cascades. The alpha chain contains the guanine nucleotide binding site and alternates between an active, GTP-bound state and an inactive, GDP-bound state. Signaling by an activated GPCR promotes GDP release and GTP binding. The alpha subunit has a low GTPase activity that converts bound GTP to GDP, thereby terminating the signal. Both GDP release and GTP hydrolysis are modulated by numerous regulatory proteins. Signaling is mediated via phospholipase C-beta-dependent inositol lipid hydrolysis for signal propagation: activates phospholipase C-beta: following GPCR activation, GNA11 activates PLC-beta (PLCB1, PLCB2, PLCB3 or PLCB4), leading to production of diacylglycerol (DAG) and inositol 1,4,5-trisphosphate (IP3). Transduces FFAR4 signaling in response to long-chain fatty acids (LCFAs). Together with GNAQ, required for heart development. In the respiratory epithelium, transmits OXGR1-dependent signals that lead to downstream intracellular Ca(2+) release and mucocilliary clearance of airborne pathogens. The sequence is that of Guanine nucleotide-binding protein subunit alpha-11 (GNA11) from Sus scrofa (Pig).